The following is a 97-amino-acid chain: MNQENPPPYPGPGPTAPYPPYPPQPMGPGPMGGPYPPPQGYPYQGYPQYGWQGGPQEPPKTTVYVVEDQRRDELGPSTCLTACWTALCCCCLWDMLT.

The span at 1 to 40 (MNQENPPPYPGPGPTAPYPPYPPQPMGPGPMGGPYPPPQG) shows a compositional bias: pro residues. The interval 1–61 (MNQENPPPYP…QGGPQEPPKT (61 aa)) is disordered. Residues 41-50 (YPYQGYPQYG) show a composition bias toward low complexity. The helical transmembrane segment at 74-91 (LGPSTCLTACWTALCCCC) threads the bilayer.

It belongs to the CYSTM1 family.

The protein resides in the membrane. The sequence is that of Cysteine-rich and transmembrane domain-containing protein 1 (CYSTM1) from Homo sapiens (Human).